The chain runs to 103 residues: Large ribosomal subunit protein bL21 (103 aa).

This sequence belongs to the bacterial ribosomal protein bL21 family. Part of the 50S ribosomal subunit. Contacts protein L20.

In terms of biological role, this protein binds to 23S rRNA in the presence of protein L20. The sequence is that of Large ribosomal subunit protein bL21 from Nocardia farcinica (strain IFM 10152).